Reading from the N-terminus, the 406-residue chain is Exodeoxyribonuclease 7 large subunit (406 aa).

Belongs to the XseA family. Heterooligomer composed of large and small subunits.

Its subcellular location is the cytoplasm. The catalysed reaction is Exonucleolytic cleavage in either 5'- to 3'- or 3'- to 5'-direction to yield nucleoside 5'-phosphates.. Functionally, bidirectionally degrades single-stranded DNA into large acid-insoluble oligonucleotides, which are then degraded further into small acid-soluble oligonucleotides. In Thermobifida fusca (strain YX), this protein is Exodeoxyribonuclease 7 large subunit.